The sequence spans 509 residues: H/ACA ribonucleoprotein complex subunit DKC1 (509 aa).

The segment at 1-25 (MADAEAAMTFPKKHKKKKERKPLPE) is disordered. N-acetylalanine is present on Ala2. Residues 2 to 22 (ADAEAAMTFPKKHKKKKERKP) form a nucleolar localization region. A compositionally biased stretch (basic residues) spans 11 to 20 (PKKHKKKKER). Residues Lys21, Lys40, and Lys44 each participate in a glycyl lysine isopeptide (Lys-Gly) (interchain with G-Cter in SUMO2) cross-link. Asp126 (nucleophile) is an active-site residue. Lys192 is covalently cross-linked (Glycyl lysine isopeptide (Lys-Gly) (interchain with G-Cter in SUMO2)). The 76-residue stretch at 297–372 (HKRLVMKDSA…VVAKIKRVIM (76 aa)) folds into the PUA domain. Positions 381–509 (WGLGPKASQK…KARAAEELSG (129 aa)) are disordered. Ser388 carries the post-translational modification Phosphoserine. Glycyl lysine isopeptide (Lys-Gly) (interchain with G-Cter in SUMO2) cross-links involve residues Lys395 and Lys425. Residues 416 to 425 (DYVDYSDSSK) are compositionally biased toward basic and acidic residues. Residues 447–509 (KRKRDSDSDA…KARAAEELSG (63 aa)) are nuclear and nucleolar localization. 2 positions are modified to phosphoserine: Ser452 and Ser454. At Thr460 the chain carries Phosphothreonine. The segment covering 466–475 (RVKKEKKKKK) has biased composition (basic residues). A compositionally biased stretch (acidic residues) spans 481–490 (GEEAAEDGDG). A Phosphoserine modification is found at Ser508.

Belongs to the pseudouridine synthase TruB family. Part of the H/ACA small nucleolar ribonucleoprotein (H/ACA snoRNP) complex, which contains NHP2/NOLA2, GAR1/NOLA1, NOP10/NOLA3, and DKC1/NOLA4, which is presumed to be the catalytic subunit. The complex contains a stable core formed by binding of one or two NOP10-DKC1 heterodimers to NHP2; GAR1 subsequently binds to this core via DKC1. The complex binds a box H/ACA small nucleolar RNA (snoRNA), which may target the specific site of modification within the RNA substrate. During assembly, the complex contains NAF1 instead of GAR1/NOLA1. The complex also interacts with TERC, which contains a 3'-terminal domain related to the box H/ACA snoRNAs. Specific interactions with snoRNAs or TERC are mediated by GAR1 and NHP2. Associates with NOLC1/NOPP140. H/ACA snoRNPs interact with the SMN complex, consisting of SMN1 or SMN2, GEMIN2/SIP1, DDX20/GEMIN3, and GEMIN4. This is mediated by interaction between GAR1 and SMN1 or SMN2. The SMN complex may be required for correct assembly of the H/ACA snoRNP complex. Component of the telomerase holoenzyme complex composed of one molecule of TERT, one molecule of WRAP53/TCAB1, two molecules of H/ACA ribonucleoprotein complex subunits DKC1, NOP10, NHP2 and GAR1, and a telomerase RNA template component (TERC). The telomerase holoenzyme complex is associated with TEP1, SMG6/EST1A and POT1. Interacts with SHQ1; this interaction may lead to the stabilization of DKC1, from the time of its synthesis until its association with NOP10, NHP2, and NAF1 at the nascent H/ACA RNA. Interacts with HMBOX1. Interacts with DHX36.

It is found in the nucleus. The protein resides in the nucleolus. It localises to the cajal body. It carries out the reaction uridine in 5S rRNA = pseudouridine in 5S rRNA. Catalytic subunit of H/ACA small nucleolar ribonucleoprotein (H/ACA snoRNP) complex, which catalyzes pseudouridylation of rRNA. This involves the isomerization of uridine such that the ribose is subsequently attached to C5, instead of the normal N1. Each rRNA can contain up to 100 pseudouridine ('psi') residues, which may serve to stabilize the conformation of rRNAs. Required for ribosome biogenesis and telomere maintenance. Also required for correct processing or intranuclear trafficking of TERC, the RNA component of the telomerase reverse transcriptase (TERT) holoenzyme. This chain is H/ACA ribonucleoprotein complex subunit DKC1 (Dkc1), found in Rattus norvegicus (Rat).